A 78-amino-acid chain; its full sequence is Putative membrane protein insertion efficiency factor (78 aa).

It belongs to the UPF0161 family.

The protein localises to the cell inner membrane. Functionally, could be involved in insertion of integral membrane proteins into the membrane. In Prochlorococcus marinus subsp. pastoris (strain CCMP1986 / NIES-2087 / MED4), this protein is Putative membrane protein insertion efficiency factor.